Here is a 132-residue protein sequence, read N- to C-terminus: Small ribosomal subunit protein uS12 (132 aa).

Aspartate 89 is modified (3-methylthioaspartic acid). Residues 102–132 (LDTSGVADRKQSRSKYGAKVPKAGAAPAKKK) form a disordered region. Low complexity predominate over residues 118-132 (GAKVPKAGAAPAKKK).

It belongs to the universal ribosomal protein uS12 family. As to quaternary structure, part of the 30S ribosomal subunit. Contacts proteins S8 and S17. May interact with IF1 in the 30S initiation complex.

In terms of biological role, with S4 and S5 plays an important role in translational accuracy. Its function is as follows. Interacts with and stabilizes bases of the 16S rRNA that are involved in tRNA selection in the A site and with the mRNA backbone. Located at the interface of the 30S and 50S subunits, it traverses the body of the 30S subunit contacting proteins on the other side and probably holding the rRNA structure together. The combined cluster of proteins S8, S12 and S17 appears to hold together the shoulder and platform of the 30S subunit. The sequence is that of Small ribosomal subunit protein uS12 from Chlorobaculum tepidum (strain ATCC 49652 / DSM 12025 / NBRC 103806 / TLS) (Chlorobium tepidum).